The primary structure comprises 781 residues: Catalase-peroxidase (781 aa).

Positions 1–20 (MLYIYYLFKSLFFHTLFVFS) are cleaved as a signal peptide. Residues 125–272 (WHSAGTYRIG…LAAVQMGLIY (148 aa)) constitute a cross-link (tryptophyl-tyrosyl-methioninium (Trp-Tyr) (with M-298)). Histidine 126 serves as the catalytic Proton acceptor. The segment at 237-256 (VHHPDEHRGAKEKAAKNSDS) is disordered. Residues 272-298 (YVNPEGPDGRPDPLASARDIRETFARM) constitute a cross-link (tryptophyl-tyrosyl-methioninium (Tyr-Met) (with W-125)). Residue histidine 313 coordinates heme b. The segment at 317–336 (KTHGAAPADNVGPEPEAGEL) is disordered.

Belongs to the peroxidase family. Peroxidase/catalase subfamily. As to quaternary structure, homodimer or homotetramer. Requires heme b as cofactor. Post-translationally, formation of the three residue Trp-Tyr-Met cross-link is important for the catalase, but not the peroxidase activity of the enzyme.

It carries out the reaction H2O2 + AH2 = A + 2 H2O. The catalysed reaction is 2 H2O2 = O2 + 2 H2O. Bifunctional enzyme with both catalase and broad-spectrum peroxidase activity. This Xylella fastidiosa (strain 9a5c) protein is Catalase-peroxidase.